Consider the following 466-residue polypeptide: Zinc metalloproteinase/disintegrin (466 aa).

A signal peptide spans 1–6; that stretch reads FPYQGS. Residues 7-174 constitute a propeptide that is removed on maturation; it reads SIILESGNVN…PIKKASQLIV (168 aa). The Peptidase M12B domain maps to 180–377; sequence RYMEIVIVVD…ENPPCILNKP (198 aa). Positions 183 and 267 each coordinate Ca(2+). Cystine bridges form between Cys-291/Cys-372, Cys-331/Cys-356, and Cys-333/Cys-339. His-316 contacts Zn(2+). Glu-317 is a catalytic residue. Zn(2+)-binding residues include His-320 and His-326. 2 residues coordinate Ca(2+): Cys-372 and Asn-375. Positions 377 to 401 are excised as a propeptide; that stretch reads PLRTDTVSTPVSGNELLEAGKDYDR. The 82-residue stretch at 385-466 folds into the Disintegrin domain; the sequence is TPVSGNELLE…GDCPRNPYHA (82 aa). Cystine bridges form between Cys-422–Cys-428, Cys-427–Cys-452, and Cys-440–Cys-459. Residues 444–446 carry the Cell attachment site motif; the sequence is RGD.

It belongs to the venom metalloproteinase (M12B) family. P-II subfamily. P-IIa sub-subfamily. As to quaternary structure, monomer. Requires Zn(2+) as cofactor. As to expression, expressed by the venom gland.

It localises to the secreted. Impairs hemostasis in the envenomed animal. In terms of biological role, inhibits platelet aggregation induced by ADP, thrombin, platelet-activating factor and collagen. Acts by inhibiting fibrinogen interaction with platelet receptors GPIIb/GPIIIa (ITGA2B/ITGB3). In Deinagkistrodon acutus (Hundred-pace snake), this protein is Zinc metalloproteinase/disintegrin.